A 585-amino-acid polypeptide reads, in one-letter code: Pre-hexon-linking protein IIIa (585 aa).

Residues 1-24 form a disordered region; the sequence is MMQDATDPAVRAALQSQPSGLNST. The peripentonal hexon-tethering domain stretch occupies residues 1–106; the sequence is MMQDATDPAV…ALLQRVARYN (106 aa). Polar residues predominate over residues 14 to 24; the sequence is LQSQPSGLNST. A binding to hexon-linking protein region spans residues 138–251; that stretch reads GSMVALNAFL…FTDSGSVSRD (114 aa). Ser225 carries the post-translational modification Phosphoserine; by host. Thr274 carries the phosphothreonine; by host modification. Phosphoserine; by host occurs at positions 310, 444, 449, 450, 452, 469, and 473. Positions 438–475 are disordered; it reads AALRKESFRRPSSLSDLGAAAPRSDASSPFPSLIGSFT. Positions 462 to 475 are enriched in polar residues; it reads DASSPFPSLIGSFT. Tyr490 carries the phosphotyrosine; by host modification. 2 positions are modified to phosphoserine; by host: Ser494 and Ser515. Residues 528-573 are disordered; it reads QEHRDVPGPRPPTRRQRHDRQRGLVWEDDDSADDSSVLDLGGSGNP. Positions 571 to 585 are excised as a propeptide; that stretch reads GNPFAHLRPRLGRMF.

The protein belongs to the adenoviridae hexon-linking protein IIIa family. As to quaternary structure, interacts with hexon proteins; this interaction tethers the peripentonal hexons to hexons situated in the facet. Interacts with the penton protein (via N-terminus). Interacts with packaging protein 3; this interaction is required to promote correct genome packaging. In terms of processing, cleaved near the C-terminus by the viral protease during virion maturation to form the mature protein.

The protein resides in the virion. It is found in the host nucleus. Functionally, structural component of the virion that acts as a cement protein on the capsid exterior which mediates the interactions between the hexons, including the peripentonal hexons, and reaches all the way to the penton vertices. Two hexon linking proteins IIIa, one from each facet, stabilize the unique edge interface between a pair of facets. As the virus enters the host cell, hexon linking proteins IIIa are shed concomitant with virion acidification in the endosome. During virus assembly, seems to play a role in the serotype specificity of the packaging of viral DNA via its interaction with packaging protein 3. The chain is Pre-hexon-linking protein IIIa from Human adenovirus C serotype 2 (HAdV-2).